A 210-amino-acid chain; its full sequence is Prolactin (210 aa).

Positions 1-23 (MAEGSRLYFAVTVLMCAFVSING) are cleaved as a signal peptide. 2 disulfides stabilise this stretch: Cys69-Cys183 and Cys200-Cys210.

This sequence belongs to the somatotropin/prolactin family. In terms of tissue distribution, pituitary gland.

The protein resides in the secreted. This is Prolactin (prl) from Hypophthalmichthys nobilis (Bighead carp).